Consider the following 500-residue polypeptide: Glycerol kinase (500 aa).

Position 14 (T14) interacts with ADP. Residues T14, T15, and S16 each coordinate ATP. T14 contacts sn-glycerol 3-phosphate. An ADP-binding site is contributed by R18. R84, E85, and Y136 together coordinate sn-glycerol 3-phosphate. Glycerol-binding residues include R84, E85, and Y136. H232 carries the post-translational modification Phosphohistidine; by HPr. D246 provides a ligand contact to sn-glycerol 3-phosphate. D246 and Q247 together coordinate glycerol. ADP-binding residues include T268 and G311. ATP contacts are provided by T268, G311, Q315, and G412. G412 and N416 together coordinate ADP.

The protein belongs to the FGGY kinase family. As to quaternary structure, homotetramer and homodimer (in equilibrium). The phosphoenolpyruvate-dependent sugar phosphotransferase system (PTS), including enzyme I, and histidine-containing protein (HPr) are required for the phosphorylation, which leads to the activation of the enzyme.

The catalysed reaction is glycerol + ATP = sn-glycerol 3-phosphate + ADP + H(+). It functions in the pathway polyol metabolism; glycerol degradation via glycerol kinase pathway; sn-glycerol 3-phosphate from glycerol: step 1/1. With respect to regulation, activated by phosphorylation and inhibited by fructose 1,6-bisphosphate (FBP). Key enzyme in the regulation of glycerol uptake and metabolism. Catalyzes the phosphorylation of glycerol to yield sn-glycerol 3-phosphate. This is Glycerol kinase from Limosilactobacillus reuteri (strain DSM 20016) (Lactobacillus reuteri).